A 430-amino-acid polypeptide reads, in one-letter code: Serine--tRNA ligase (430 aa).

Residue 237–239 coordinates L-serine; that stretch reads TAE. Residue 268 to 270 coordinates ATP; that stretch reads RSE. Glu-291 serves as a coordination point for L-serine. 355–358 contributes to the ATP binding site; that stretch reads EISS. Residue Ser-391 participates in L-serine binding.

Belongs to the class-II aminoacyl-tRNA synthetase family. Type-1 seryl-tRNA synthetase subfamily. In terms of assembly, homodimer. The tRNA molecule binds across the dimer.

The protein localises to the cytoplasm. The catalysed reaction is tRNA(Ser) + L-serine + ATP = L-seryl-tRNA(Ser) + AMP + diphosphate + H(+). It carries out the reaction tRNA(Sec) + L-serine + ATP = L-seryl-tRNA(Sec) + AMP + diphosphate + H(+). It participates in aminoacyl-tRNA biosynthesis; selenocysteinyl-tRNA(Sec) biosynthesis; L-seryl-tRNA(Sec) from L-serine and tRNA(Sec): step 1/1. Catalyzes the attachment of serine to tRNA(Ser). Is also able to aminoacylate tRNA(Sec) with serine, to form the misacylated tRNA L-seryl-tRNA(Sec), which will be further converted into selenocysteinyl-tRNA(Sec). The chain is Serine--tRNA ligase from Klebsiella pneumoniae (strain 342).